The primary structure comprises 407 residues: MSADSADSVPSPRSAFATTLQIVSVVSFTFICYLTIGLPLAVLPGFVHDELGFSAIVAGAAISVQYFATLASRPLAGRCADTLGPKRTVLRGLAACGASGALLLSAFAFARWPAASIVLLVASRLVLGIGESLVGTGAILWGIGRVGTAHNARVISWNGIATYGALAIGAPVGVAISHALIPAVLGMLVIALAALGYYLARLITPVPLVHGERMSYASVLTRVLPHGLGLALGSAGFGSIATFITLYYAARHWPNAALSLTVFGTLFIGARLLFANTIKTHGGFRVAIVSFAFECAGLLMLWLAPVPHVALVGAALTGFGFALIFPALGVEAVALVPPASRGAALSAYSVFLDLSLGITGPLAGYVAGAFGYPQVFLCAAVAAAAGVALSTVLYQRQARLSGSGAAA.

The next 12 helical transmembrane spans lie at 22-42, 51-71, 101-121, 126-146, 154-174, 179-199, 227-247, 258-278, 286-306, 309-329, 347-367, and 369-389; these read IVSVVSFTFICYLTIGLPLAV, LGFSAIVAGAAISVQYFATLA, ALLLSAFAFARWPAASIVLLV, VLGIGESLVGTGAILWGIGRV, VISWNGIATYGALAIGAPVGV, ALIPAVLGMLVIALAALGYYL, GLGLALGSAGFGSIATFITLY, LSLTVFGTLFIGARLLFANTI, VAIVSFAFECAGLLMLWLAPV, VALVGAALTGFGFALIFPALG, AYSVFLDLSLGITGPLAGYVA, and AFGYPQVFLCAAVAAAAGVAL.

It belongs to the major facilitator superfamily. YhhS family.

Its subcellular location is the cell inner membrane. This is an uncharacterized protein from Burkholderia pseudomallei (strain 1106a).